Reading from the N-terminus, the 364-residue chain is Envelope glycoprotein US27 (364 aa).

Over 1–36 (MTTSTTTTTNIMLQVSNVTNHTLNSTEIYQLFEYTR) the chain is Virion surface. Residues asparagine 17, asparagine 20, and asparagine 24 are each glycosylated (N-linked (GlcNAc...) asparagine; by host). Residues 37 to 57 (FGVWLMCIVGTFLNMLVITTI) traverse the membrane as a helical segment. The Intravirion portion of the chain corresponds to 58–69 (LYYRRKKKSPSD). The helical transmembrane segment at 70–90 (TYICNLAVADLLIVVGLPFFL) threads the bilayer. The Virion surface portion of the chain corresponds to 91 to 103 (EYAKHHPKLSREV). The chain crosses the membrane as a helical span at residues 104-124 (VCSGLNACFYICLFAGVCFLI). Residues 125–150 (NLSMDRYCVIVWGVELNRVRNNKRAT) are Intravirion-facing. The chain crosses the membrane as a helical span at residues 151 to 171 (CWVVIFWILAALMGMPHYLMY). The Virion surface segment spans residues 172 to 188 (SHTNNECVGEFANETSG). A helical transmembrane segment spans residues 189 to 209 (WFPVFLNTKVNICGYLAPIVL). Residues 210–234 (MAYTYNRMVRFIINYVGKWHMQTLH) lie on the Intravirion side of the membrane. The chain crosses the membrane as a helical span at residues 235 to 255 (VLLVVVVSFASFWFPFNLALF). The Virion surface portion of the chain corresponds to 256-279 (LESIRLLSGTQNETLQTVITFCLY). The helical transmembrane segment at 280 to 300 (VGQFLAYVRACLNPGIYILVG) threads the bilayer. Over 301 to 364 (TQMRKDMWTT…MESGEEEFLL (64 aa)) the chain is Intravirion. Residues 344–364 (KRTHYDRKHAPMESGEEEFLL) are disordered.

Belongs to the G-protein coupled receptor 1 family. In terms of assembly, heterodimerizes with US28.

The protein resides in the virion. The protein localises to the host cell membrane. Its function is as follows. Plays an important role in spread of HCMV via the extracellular route. As a G-protein-coupled receptor (vGPCR), may activate signaling pathways important for virion assembly or egress processes. This chain is Envelope glycoprotein US27 (US27), found in Homo sapiens (Human).